We begin with the raw amino-acid sequence, 114 residues long: Large ribosomal subunit protein bL19 (114 aa).

This sequence belongs to the bacterial ribosomal protein bL19 family.

In terms of biological role, this protein is located at the 30S-50S ribosomal subunit interface and may play a role in the structure and function of the aminoacyl-tRNA binding site. The polypeptide is Large ribosomal subunit protein bL19 (Desulfatibacillum aliphaticivorans).